We begin with the raw amino-acid sequence, 89 residues long: Envelope protein US9 (89 aa).

The span at Met1–Ser10 shows a compositional bias: basic and acidic residues. Residues Met1 to Pro21 are disordered. Residues Met1–Leu66 lie on the Intravirion side of the membrane. The short motif at Tyr20–Ala23 is the Internalization motif element. The interval Glu29–Glu38 is acidic. Phosphoserine; by host CK2 occurs at positions 33 and 35. A helical; Signal-anchor for type II membrane protein transmembrane segment spans residues Val67–Leu87. Residues Leu88–Arg89 lie on the Virion surface side of the membrane.

The protein belongs to the alphaherpesvirinae envelope protein US9 family. Post-translationally, phosphorylated on serines within the acidic cluster, possibly by host CK2. Phosphorylation determines whether endocytosed viral US9 traffics to the trans-Golgi network or recycles to the cell membrane.

The protein resides in the virion membrane. The protein localises to the host Golgi apparatus membrane. It localises to the host smooth endoplasmic reticulum membrane. Its subcellular location is the host cell membrane. Essential for the anterograde spread of the infection throughout the host nervous system. Together with the gE/gI heterodimer, US9 is involved in the sorting and transport of viral structural components toward axon tips. In Homo sapiens (Human), this protein is Envelope protein US9.